Reading from the N-terminus, the 45-residue chain is Unknown protein from spots 23/28/205 of 2D-PAGE of thylakoid (45 aa).

The protein resides in the plastid. Its subcellular location is the chloroplast thylakoid. The chain is Unknown protein from spots 23/28/205 of 2D-PAGE of thylakoid from Pisum sativum (Garden pea).